Consider the following 568-residue polypeptide: Potassium-transporting ATPase potassium-binding subunit (568 aa).

The next 10 membrane-spanning stretches (helical) occupy residues 1–21, 60–80, 129–149, 174–194, 251–271, 278–298, 381–401, 420–440, 488–508, and 528–548; these read MWLT…LAVP, GLAL…LLRA, AITF…AGFI, VMLP…VPQA, IHIL…GSML, WVLF…VFTA, VGLI…GMMI, VMLA…LAAV, IGLA…ALAG, and PLFM…TFLP.

This sequence belongs to the KdpA family. The system is composed of three essential subunits: KdpA, KdpB and KdpC.

The protein localises to the cell inner membrane. Part of the high-affinity ATP-driven potassium transport (or Kdp) system, which catalyzes the hydrolysis of ATP coupled with the electrogenic transport of potassium into the cytoplasm. This subunit binds the periplasmic potassium ions and delivers the ions to the membrane domain of KdpB through an intramembrane tunnel. This Delftia acidovorans (strain DSM 14801 / SPH-1) protein is Potassium-transporting ATPase potassium-binding subunit.